Consider the following 225-residue polypeptide: Uracil-DNA glycosylase (225 aa).

The active-site Proton acceptor is the D67.

Belongs to the uracil-DNA glycosylase (UDG) superfamily. UNG family.

The protein resides in the cytoplasm. The catalysed reaction is Hydrolyzes single-stranded DNA or mismatched double-stranded DNA and polynucleotides, releasing free uracil.. Excises uracil residues from the DNA which can arise as a result of misincorporation of dUMP residues by DNA polymerase or due to deamination of cytosine. This is Uracil-DNA glycosylase from Coxiella burnetii (strain Dugway 5J108-111).